We begin with the raw amino-acid sequence, 350 residues long: Tsukushi (350 aa).

The first 17 residues, methionine 1 to serine 17, serve as a signal peptide directing secretion. An LRRNT domain is found at serine 18 to leucine 59. LRR repeat units follow at residues aspartate 60–glycine 81, threonine 86–lysine 107, tyrosine 110–tyrosine 131, arginine 133–leucine 154, arginine 159–proline 180, asparagine 183–isoleucine 203, proline 204–glycine 225, glycine 228–threonine 250, serine 253–glycine 275, and serine 278–asparagine 299. 2 N-linked (GlcNAc...) asparagine glycosylation sites follow: asparagine 75 and asparagine 91.

In terms of assembly, interacts with bmp4. Interacts with dll1 (via extracellular region). Interacts with fgf8; inhibits fgf8 signaling. Interacts with nodal2/Xnr2; enhances nodal2 activity.

Its subcellular location is the secreted. Functionally, contributes to various developmental events through its interactions with multiple signaling pathways. Dorsalizing factor which functions as an inhibitor of bone morphogenetic proteins (BMP) during gastrulation. Promotes dll1-dependent activation of Notch signaling and is required for neural crest formation. Induces endoderm and dorsal mesoderm formation by enhancing nodal2/Xnr2 activity while inhibiting ventrolateral mesoderm formation through inhibition of fgf8. This chain is Tsukushi (tsku), found in Xenopus tropicalis (Western clawed frog).